Here is a 202-residue protein sequence, read N- to C-terminus: Transmembrane protein 223 (202 aa).

Residues 1–43 (MAAPGRRWSVLLFRALQSLSARRALHDTAPPRDVLLFEHERGR) lie on the Mitochondrial matrix side of the membrane. The chain crosses the membrane as a helical span at residues 44 to 64 (FFAVLGLFCAGQGVFWASLAI). Over 65-97 (ASLARPPTPVRPTDAKTPDHGGLDLRSTLWRYG) the chain is Mitochondrial intermembrane. Residues 98-118 (LAVGCGAIGSLVLGAGLLFSL) form a helical membrane-spanning segment. Over 119 to 202 (RSVRSVMLRA…DNTVGAYRSL (84 aa)) the chain is Mitochondrial matrix.

The protein belongs to the TMEM223 family. In terms of assembly, associates with the mitochondrial ribosome.

Its subcellular location is the mitochondrion inner membrane. Mitochondrial ribosome-associated protein involved in the first steps of cytochrome c oxidase complex (complex IV) biogenesis. Stimulates the translation of MT-CO1 mRNA and is a constituent of early MT-CO1 assembly intermediates. This is Transmembrane protein 223 from Bos taurus (Bovine).